The chain runs to 165 residues: Protein SprT (165 aa).

In terms of domain architecture, SprT-like spans 22 to 163 (LAQANLKLDR…RCVHCGEPLV (142 aa)). H78 serves as a coordination point for Zn(2+). The active site involves E79. Position 82 (H82) interacts with Zn(2+).

The protein belongs to the SprT family. Zn(2+) serves as cofactor.

It localises to the cytoplasm. This chain is Protein SprT, found in Salmonella agona (strain SL483).